A 471-amino-acid chain; its full sequence is Proline--tRNA ligase 2 (471 aa).

It belongs to the class-II aminoacyl-tRNA synthetase family. ProS type 3 subfamily. In terms of assembly, homodimer.

It localises to the cytoplasm. The catalysed reaction is tRNA(Pro) + L-proline + ATP = L-prolyl-tRNA(Pro) + AMP + diphosphate. In terms of biological role, catalyzes the attachment of proline to tRNA(Pro) in a two-step reaction: proline is first activated by ATP to form Pro-AMP and then transferred to the acceptor end of tRNA(Pro). The polypeptide is Proline--tRNA ligase 2 (Streptomyces avermitilis (strain ATCC 31267 / DSM 46492 / JCM 5070 / NBRC 14893 / NCIMB 12804 / NRRL 8165 / MA-4680)).